The following is a 341-amino-acid chain: Undecaprenyl-phosphate 4-deoxy-4-formamido-L-arabinose transferase (341 aa).

The next 2 membrane-spanning stretches (helical) occupy residues 235–255 (LSIVGFSLAALGMLFAFALIV) and 269–289 (LFVLFAVLFVFTGGQFIGMGL).

Belongs to the glycosyltransferase 2 family.

It localises to the cell inner membrane. The enzyme catalyses UDP-4-deoxy-4-formamido-beta-L-arabinose + di-trans,octa-cis-undecaprenyl phosphate = 4-deoxy-4-formamido-alpha-L-arabinopyranosyl di-trans,octa-cis-undecaprenyl phosphate + UDP. Its pathway is glycolipid biosynthesis; 4-amino-4-deoxy-alpha-L-arabinose undecaprenyl phosphate biosynthesis; 4-amino-4-deoxy-alpha-L-arabinose undecaprenyl phosphate from UDP-4-deoxy-4-formamido-beta-L-arabinose and undecaprenyl phosphate: step 1/2. It participates in bacterial outer membrane biogenesis; lipopolysaccharide biosynthesis. Its function is as follows. Catalyzes the transfer of 4-deoxy-4-formamido-L-arabinose from UDP to undecaprenyl phosphate. The modified arabinose is attached to lipid A and is required for resistance to polymyxin and cationic antimicrobial peptides. The sequence is that of Undecaprenyl-phosphate 4-deoxy-4-formamido-L-arabinose transferase from Pseudomonas fluorescens (strain SBW25).